A 427-amino-acid polypeptide reads, in one-letter code: MSAIVDVIAREILDSRGNPTVEADVLLESGVLGRAAVPSGASVGTREAVELRDEDAQRYFGKGVLKAVENVNTEISEAIMGLDAMDQAFIDRTLIDLDGSGNKSRLGANAILSVSLAVAKAAAEECGLPLYRYVGGAGSMSMPVPMMNVINGGAHANNNIDMQEFVIIPLGAQSFREALRCGAEVFHTLKGLLDKRGMHTAVGDEGGFAPDLPNNEAALQLIVEAIENAGYLPGPDVAIGLDCAASEFYRDGKYHLESDGLALDSTQFADYLATWIDKYPIISIEDGMSEHDWDGWKLLTSRLGKSVQLVGDDIFVTNASILKEGVSQGIANSILIKLNQIGTLTEALYAIESAKRAGYTAVVSHRSGETEDTTIADIAVASNALQIKTGSLSRSDRLAKYNQLLRIEEDLGDTASYPGRGAFYQLK.

Glutamine 163 contacts (2R)-2-phosphoglycerate. Glutamate 205 serves as the catalytic Proton donor. Mg(2+)-binding residues include aspartate 242, glutamate 285, and aspartate 312. (2R)-2-phosphoglycerate-binding residues include lysine 337, arginine 366, serine 367, and lysine 388. Lysine 337 (proton acceptor) is an active-site residue.

It belongs to the enolase family. The cofactor is Mg(2+).

The protein localises to the cytoplasm. It is found in the secreted. It localises to the cell surface. The catalysed reaction is (2R)-2-phosphoglycerate = phosphoenolpyruvate + H2O. It functions in the pathway carbohydrate degradation; glycolysis; pyruvate from D-glyceraldehyde 3-phosphate: step 4/5. Catalyzes the reversible conversion of 2-phosphoglycerate (2-PG) into phosphoenolpyruvate (PEP). It is essential for the degradation of carbohydrates via glycolysis. This is Enolase from Nitrosospira multiformis (strain ATCC 25196 / NCIMB 11849 / C 71).